Consider the following 363-residue polypeptide: Disease resistance protein RBA1 (363 aa).

Residues 12 to 175 (PVPKVFLSFR…EIVKEVERVL (164 aa)) form the TIR domain. Residues 21 to 26 (RGEEIR) and Gly53 each bind NAD(+). Glu86 is an active-site residue.

In terms of assembly, homooligomer; homooligomerization is required for activity.

Its subcellular location is the cytoplasm. The protein localises to the nucleus. The protein resides in the nucleoplasm. It carries out the reaction NAD(+) + H2O = ADP-D-ribose + nicotinamide + H(+). It catalyses the reaction NADP(+) + H2O = ADP-D-ribose 2'-phosphate + nicotinamide + H(+). Its function is as follows. Disease resistance (R) protein that specifically recognizes the HopBA1 type III effector protein from P.syringae, and triggers cell death. Acts as a NAD(+) hydrolase (NADase): in response to pathogen-recognition, catalyzes cleavage of NAD(+) into ADP-D-ribose (ADPR) and nicotinamide; NAD(+) cleavage triggering a defense system that promotes cell death. In addition to ADPR, also generates a cyclization variant of cyclic ADPR (cADPR), termed v-cADPR, for which the cyclizing bond is unknown. Also able to hydrolyze NADP(+), but not other NAD(+)-related molecules. The polypeptide is Disease resistance protein RBA1 (Arabidopsis thaliana (Mouse-ear cress)).